Here is a 452-residue protein sequence, read N- to C-terminus: Zinc finger protein 277 (452 aa).

The segment at 200–224 (LMCLYCEKIFRDRPTLKEHMRKKGH) adopts a C2H2-type 1 zinc-finger fold. The segment at 248-271 (APTPRKQHLQKRRRETASVSTVAD) is disordered. Residues 252-261 (RKQHLQKRRR) are compositionally biased toward basic residues. A C2H2-type 2 zinc finger spans residues 361–385 (LRCVTCDLQFDEEELLVEHMAQESH).

It belongs to the ZNF277 family. As to quaternary structure, interacts with components of the origin recognition complex (ORC) complex, Orc2 and Orc3, components of the SAGA transcription coactivator-HAT complex, Gcn5 and e(y)2, components of the mRNP biogenesis THO complex, thoc5 and e(y)2, and a component of the TFIID complex, TBP. Also interacts with polybromo, a component of the chromatin remodeling SWI/SNF complex.

Its subcellular location is the nucleus. The protein localises to the cytoplasm. DNA binding protein which is involved in the positive regulation of both basal and inducible transcription. Mainly localizes to active promoter sites and interacts with components of various transcription and replication regulatory complexes, such as the ORC, SAGA, THO, TFIID and SWI/SNF complexes. It may therefore regulate transcription by promoting the association of these complexes to their binding sites. This is Zinc finger protein 277 from Drosophila melanogaster (Fruit fly).